The sequence spans 653 residues: Brain-enriched guanylate kinase-associated protein (653 aa).

Phosphotyrosine is present on Tyr-186. Residues 241–271 form a disordered region; it reads PGSLSSHLSEASAQDLGFPEGLEKPGSRPPY. A compositionally biased stretch (polar residues) spans 243 to 252; it reads SLSSHLSEAS. Phosphoserine occurs at positions 249, 278, 295, and 314. Positions 288 to 329 are disordered; the sequence is RHQDRRPSVEGPGSDVGFLQAQNSTDSTAEEEEEEEEDTEAG. Residues 315 to 327 show a composition bias toward acidic residues; that stretch reads TAEEEEEEEEDTE. Residues Ser-400 and Ser-427 each carry the phosphoserine modification. Asymmetric dimethylarginine is present on Arg-435. Ser-523, Ser-533, Ser-535, Ser-558, Ser-560, Ser-564, Ser-613, and Ser-623 each carry phosphoserine. Positions 587-653 are disordered; that stretch reads GASGSPEPEL…KAQLYGTLLN (67 aa).

In terms of assembly, interacts with DLG4 and DLGAP1 and forms a ternary complex.

Its subcellular location is the cytoplasm. It is found in the membrane. Functionally, may sustain the structure of the postsynaptic density (PSD). This is Brain-enriched guanylate kinase-associated protein (BEGAIN) from Ovis aries (Sheep).